The chain runs to 298 residues: MTDAAVSFAKDFLAGGVAAAISKTAVAPIERVKLLLQVQHASKQITADKQYKGIIDCVVRIPKEQGVLSFWRGNLANVIRYFPTQALNFAFKDKYKQIFLGGVDKRTQFWRYFAGNLASGGAAGATSLCFVYPLDFARTRLAADVGKAGAEREFKGLGDCLVKIYKSDGIKGLYQGFNVSVQGIIIYRAAYFGIYDTAKGMLPDPKNTHIFISWMIAQSVTAVAGLTSYPFDTVRRRMMMQSGRKGTDIMYTGTLDCWRKIARDEGGKAFFKGAWSNVLRGMGGAFVLVLYDEIKKYT.

Methionine 1 is modified (N-acetylmethionine). Over 1 to 7 (MTDAAVS) the chain is Mitochondrial intermembrane. Threonine 2 carries the post-translational modification N-acetylthreonine; in ADP/ATP translocase 2, N-terminally processed. Residues 6–98 (VSFAKDFLAG…FAFKDKYKQI (93 aa)) form a Solcar 1 repeat. Position 7 is a phosphoserine (serine 7). The helical transmembrane segment at 8-37 (FAKDFLAGGVAAAISKTAVAPIERVKLLLQ) threads the bilayer. The residue at position 23 (lysine 23) is an N6-malonyllysine. The Mitochondrial matrix portion of the chain corresponds to 38-74 (VQHASKQITADKQYKGIIDCVVRIPKEQGVLSFWRGN). An N6-succinyllysine modification is found at lysine 43. Position 52 is an N6,N6,N6-trimethyllysine; alternate (lysine 52). At lysine 52 the chain carries N6,N6-dimethyllysine; alternate. Lysine 52 carries the post-translational modification N6-methyllysine; alternate. Residues 75-99 (LANVIRYFPTQALNFAFKDKYKQIF) traverse the membrane as a helical segment. The ADP site is built by arginine 80 and lysine 92. Residues lysine 92 and lysine 96 each carry the N6-malonyllysine modification. At 100-109 (LGGVDKRTQF) the chain is on the mitochondrial intermembrane side. N6-acetyllysine; alternate is present on lysine 105. Lysine 105 is subject to N6-succinyllysine; alternate. A helical membrane pass occupies residues 110 to 130 (WRYFAGNLASGGAAGATSLCF). Solcar repeat units lie at residues 111–201 (RYFA…AKGM) and 212–297 (ISWM…IKKY). Over 131–178 (VYPLDFARTRLAADVGKAGAEREFKGLGDCLVKIYKSDGIKGLYQGFN) the chain is Mitochondrial matrix. Residue lysine 147 is modified to N6-methyllysine; alternate. N6-acetyllysine; alternate occurs at positions 147 and 155. An N6-succinyllysine; alternate mark is found at lysine 147 and lysine 155. The residue at position 147 (lysine 147) is an N6-malonyllysine; alternate. An N6-acetyllysine mark is found at lysine 163 and lysine 166. A helical membrane pass occupies residues 179–199 (VSVQGIIIYRAAYFGIYDTAK). Over 200–210 (GMLPDPKNTHI) the chain is Mitochondrial intermembrane. Residues 211-231 (FISWMIAQSVTAVAGLTSYPF) form a helical membrane-spanning segment. Topologically, residues 232-273 (DTVRRRMMMQSGRKGTDIMYTGTLDCWRKIARDEGGKAFFKG) are mitochondrial matrix. Arginine 235 lines the ADP pocket. The tract at residues 235-240 (RRRMMM) is important for transport activity. The short motif at 235-240 (RRRMMM) is the Nucleotide carrier signature motif element. Lysine 268 is subject to N6-acetyllysine; alternate. Lysine 268 carries the N6-succinyllysine; alternate modification. Residues 274-291 (AWSNVLRGMGGAFVLVLY) form a helical membrane-spanning segment. The Mitochondrial intermembrane segment spans residues 292 to 298 (DEIKKYT).

The protein belongs to the mitochondrial carrier (TC 2.A.29) family. As to quaternary structure, monomer. Component of the MMXD complex, which includes CIAO1, ERCC2, CIAO2B, MMS19 and SLC25A5/ANT2. Interacts with AK4. Interacts with TIMM44; leading to inhibit the presequence translocase TIMM23, thereby promoting stabilization of PINK1. Trimethylated by ANTKMT at Lys-52. As to expression, present in kidney, brain, heart, liver and skeletal muscle.

The protein localises to the mitochondrion inner membrane. Its subcellular location is the membrane. The catalysed reaction is ADP(in) + ATP(out) = ADP(out) + ATP(in). It catalyses the reaction H(+)(in) = H(+)(out). With respect to regulation, the matrix-open state (m-state) is inhibited by the membrane-permeable bongkrekic acid (BKA). The cytoplasmic-open state (c-state) is inhibited by the membrane-impermeable toxic inhibitor carboxyatractyloside (CATR). Proton transporter activity is inhibited by ADP:ATP antiporter activity. Functionally, ADP:ATP antiporter that mediates import of ADP into the mitochondrial matrix for ATP synthesis, and export of ATP out to fuel the cell. Cycles between the cytoplasmic-open state (c-state) and the matrix-open state (m-state): operates by the alternating access mechanism with a single substrate-binding site intermittently exposed to either the cytosolic (c-state) or matrix (m-state) side of the inner mitochondrial membrane. In addition to its ADP:ATP antiporter activity, also involved in mitochondrial uncoupling and mitochondrial permeability transition pore (mPTP) activity. Plays a role in mitochondrial uncoupling by acting as a proton transporter: proton transport uncouples the proton flows via the electron transport chain and ATP synthase to reduce the efficiency of ATP production and cause mitochondrial thermogenesis. Proton transporter activity is inhibited by ADP:ATP antiporter activity, suggesting that SLC25A5/ANT2 acts as a master regulator of mitochondrial energy output by maintaining a delicate balance between ATP production (ADP:ATP antiporter activity) and thermogenesis (proton transporter activity). Proton transporter activity requires free fatty acids as cofactor, but does not transport it. Probably mediates mitochondrial uncoupling in tissues that do not express UCP1. Also plays a key role in mPTP opening, a non-specific pore that enables free passage of the mitochondrial membranes to solutes of up to 1.5 kDa, and which contributes to cell death. It is however unclear if SLC25A5/ANT2 constitutes a pore-forming component of mPTP or regulates it. Acts as a regulator of mitophagy independently of ADP:ATP antiporter activity: promotes mitophagy via interaction with TIMM44, leading to inhibit the presequence translocase TIMM23, thereby promoting stabilization of PINK1. As part of the mitotic spindle-associated MMXD complex it may play a role in chromosome segregation. In Rattus norvegicus (Rat), this protein is ADP/ATP translocase 2.